A 271-amino-acid chain; its full sequence is NH(3)-dependent NAD(+) synthetase (271 aa).

Glycine 43 to serine 50 serves as a coordination point for ATP. Residue aspartate 49 coordinates Mg(2+). Arginine 137 contacts deamido-NAD(+). Residue threonine 157 participates in ATP binding. Glutamate 162 contacts Mg(2+). Residues lysine 170 and aspartate 177 each coordinate deamido-NAD(+). Residues lysine 186 and threonine 208 each coordinate ATP. Histidine 257 to lysine 258 provides a ligand contact to deamido-NAD(+).

This sequence belongs to the NAD synthetase family. Homodimer.

It carries out the reaction deamido-NAD(+) + NH4(+) + ATP = AMP + diphosphate + NAD(+) + H(+). The protein operates within cofactor biosynthesis; NAD(+) biosynthesis; NAD(+) from deamido-NAD(+) (ammonia route): step 1/1. Functionally, catalyzes the ATP-dependent amidation of deamido-NAD to form NAD. Uses ammonia as a nitrogen source. The sequence is that of NH(3)-dependent NAD(+) synthetase from Exiguobacterium sp. (strain ATCC BAA-1283 / AT1b).